The primary structure comprises 346 residues: Sensor protein kinase GraS (346 aa).

2 consecutive transmembrane segments (helical) span residues 15-35 (MNWI…SLID) and 43-63 (LFYI…LTYF). A Histidine kinase domain is found at 126-332 (EFVHDIKTPV…TVRLIFPLQN (207 aa)).

In terms of assembly, interacts with GraX.

The protein resides in the cell membrane. The catalysed reaction is ATP + protein L-histidine = ADP + protein N-phospho-L-histidine.. Functionally, member of the two-component regulatory system GraR/GraS involved in resistance against cationic antimicrobial peptides (CAMPs). Functions as a sensor protein kinase which phosphorylates GraR through the auxiliary protein GraX. In turn, GraR up-regulates many genes such as adhesins, exoproteins, transporters, toxins, and proteins involved in cell wall synthesis. Down-regulates the expression of many genes involved in RNA and amino acid synthesis or glycolysis. This chain is Sensor protein kinase GraS (graS), found in Staphylococcus aureus (strain bovine RF122 / ET3-1).